A 37-amino-acid chain; its full sequence is Large ribosomal subunit protein bL36 (37 aa).

Belongs to the bacterial ribosomal protein bL36 family.

This Idiomarina loihiensis (strain ATCC BAA-735 / DSM 15497 / L2-TR) protein is Large ribosomal subunit protein bL36.